The primary structure comprises 392 residues: S-adenosylmethionine synthase (392 aa).

Residue H20 coordinates ATP. D22 lines the Mg(2+) pocket. E48 contacts K(+). L-methionine-binding residues include E61 and Q106. A flexible loop region spans residues 106–116 (QSRDIINAIEK). Residues 171 to 173 (DSK), D248, 254 to 255 (RK), A271, and K275 each bind ATP. Residue D248 participates in L-methionine binding. K279 lines the L-methionine pocket.

It belongs to the AdoMet synthase family. In terms of assembly, homotetramer; dimer of dimers. Requires Mg(2+) as cofactor. It depends on K(+) as a cofactor.

It localises to the cytoplasm. It catalyses the reaction L-methionine + ATP + H2O = S-adenosyl-L-methionine + phosphate + diphosphate. Its pathway is amino-acid biosynthesis; S-adenosyl-L-methionine biosynthesis; S-adenosyl-L-methionine from L-methionine: step 1/1. Functionally, catalyzes the formation of S-adenosylmethionine (AdoMet) from methionine and ATP. The overall synthetic reaction is composed of two sequential steps, AdoMet formation and the subsequent tripolyphosphate hydrolysis which occurs prior to release of AdoMet from the enzyme. This Borreliella afzelii (strain PKo) (Borrelia afzelii) protein is S-adenosylmethionine synthase.